Reading from the N-terminus, the 434-residue chain is Arrestin domain-containing protein 1 (434 aa).

The segment at 295–345 is disordered; the sequence is PGPGSSPGLLSPVVPSAPPQEEAEAVASGPHFSDPVSLSTKSHSQQQPLST. A compositionally biased stretch (polar residues) spans 330 to 342; sequence VSLSTKSHSQQQP. 2 short sequence motifs (PPxY motif) span residues 401–404 and 414–417; these read PPEY and PPSY.

This sequence belongs to the arrestin family. As to quaternary structure, interacts (via PPxY motifs) with ITCH (via WW domains); the interaction is direct and participates in the recruitment of the ubiquitin-protein ligase ITCH to the NOTCH1 receptor. Interacts with ARRB1 and ARRB2; the interaction is direct. Interacts with TSG101; may recruit TSG101 to the plasma membrane. Interacts (via PPxY motifs) with WWP2 (via WW domains); ubiquitinates ARRDC1. Interacts with SLC11A2; controls the incorporation of SLC11A2 into extracellular vesicles through an ubiquitination-dependent mechanism. Interacts with WWP1 (via WW domains). Interacts with NEDD4 (via WW domains). Interacts with PDCD6IP. Ubiquitinated. Ubiquitination by WWP2; promotes localization to extracellular microvesicles. Ubiquitinated by WWP1.

Its subcellular location is the cell membrane. Functionally, functions as an adapter recruiting ubiquitin-protein ligases to their specific substrates. Through an ubiquitination-dependent mechanism plays for instance a role in the incorporation of SLC11A2 into extracellular vesicles. More generally, plays a role in the extracellular transport of proteins between cells through the release in the extracellular space of microvesicles. By participating in the ITCH-mediated ubiquitination and subsequent degradation of NOTCH1, negatively regulates the NOTCH signaling pathway. This is Arrestin domain-containing protein 1 from Rattus norvegicus (Rat).